The primary structure comprises 407 residues: MSYPDDYSTDIEKNKMDLKEFKEKTQIAELESKVLRLELKNKDVTRENVQIKKENEILKRELDKLRIPPLILGTILDKVNERKAVVKSSTGPNFLVNLSQFVDPEDIVPGARVCLNQQTLAIVEVLPKEKDYRAMAMEIEEKPDISFEDIGGLNNQIRDIKEVVELPLKNPELFEKVGIVPPKGVLLYGPPGTGKTLLAKAVAYETNASFVRVVGSELVKKFIGEGAKLVRDVFKLAKEKSPCIIFIDEIDAVASKRTESLTGGDREVQRTLMQLLAEMDGFDSRGDVKIIAATNRPDILDPAILRPGRFDRIIEISMPDEDGRLEILKIHTEKMNLKNVDLREVAKLAENMVGADLKAVCTEAGMFAIREEREFIKMDDFKEAISKITGKKEKCSYDMPQLTVMYG.

A coiled-coil region spans residues 22–67 (KEKTQIAELESKVLRLELKNKDVTRENVQIKKENEILKRELDKLRI). ATP-binding positions include 192–197 (GTGKTL) and His-331. The docks into pockets in the proteasome alpha-ring to cause gate opening stretch occupies residues 405–407 (MYG).

Belongs to the AAA ATPase family. In terms of assembly, homohexamer. The hexameric complex has a two-ring architecture resembling a top hat that caps the 20S proteasome core at one or both ends. Upon ATP-binding, the C-terminus of PAN interacts with the alpha-rings of the proteasome core by binding to the intersubunit pockets.

The protein localises to the cytoplasm. Its function is as follows. ATPase which is responsible for recognizing, binding, unfolding and translocation of substrate proteins into the archaeal 20S proteasome core particle. Is essential for opening the gate of the 20S proteasome via an interaction with its C-terminus, thereby allowing substrate entry and access to the site of proteolysis. Thus, the C-termini of the proteasomal ATPase function like a 'key in a lock' to induce gate opening and therefore regulate proteolysis. Unfolding activity requires energy from ATP hydrolysis, whereas ATP binding alone promotes ATPase-20S proteasome association which triggers gate opening, and supports translocation of unfolded substrates. This chain is Proteasome-activating nucleotidase, found in Methanococcus maripaludis (strain C7 / ATCC BAA-1331).